The sequence spans 718 residues: Myeloperoxidase (718 aa).

The first 15 residues, 1-15 (MKLLLALAGLLAPLA), serve as a signal peptide directing secretion. A propeptide spanning residues 16 to 138 (MLQTSNGATP…SSGCAYQDVR (123 aa)) is cleaved from the precursor. N113 carries N-linked (GlcNAc...) asparagine glycosylation. A disulfide bridge connects residues C141 and C154. A heme b-binding site is contributed by D234. The active-site Proton acceptor is the H235. D236 contributes to the Ca(2+) binding site. Cystine bridges form between C255–C265 and C259–C283. At C290 the chain carries Cysteine sulfenic acid (-SOH). A glycan (N-linked (GlcNAc...) asparagine) is linked at N297. Residues T308, F310, D312, and S314 each contribute to the Ca(2+) site. Residues N329 and N365 are each glycosylated (N-linked (GlcNAc...) asparagine). C361 and C372 form a disulfide bridge. Residues E382 and M383 each coordinate heme b. N457 is a glycosylation site (N-linked (GlcNAc...) asparagine). Residue H476 participates in heme b binding. Disulfide bonds link C580–C637 and C678–C704. N-linked (GlcNAc...) asparagine glycosylation occurs at N711.

Belongs to the peroxidase family. XPO subfamily. As to quaternary structure, homodimer; disulfide-linked. Each monomer consists of a light and a heavy chain. Found in a complex with CP and LTF; interacts directly with CP, which protects CP antioxidant properties by MPO. Requires Ca(2+) as cofactor. Heme b serves as cofactor.

The protein localises to the lysosome. It carries out the reaction chloride + H2O2 + H(+) = hypochlorous acid + H2O. In terms of biological role, part of the host defense system of polymorphonuclear leukocytes. It is responsible for microbicidal activity against a wide range of organisms. In the stimulated PMN, MPO catalyzes the production of hypohalous acids, primarily hypochlorous acid in physiologic situations, and other toxic intermediates that greatly enhance PMN microbicidal activity. Mediates the proteolytic cleavage of alpha-1-microglobulin to form t-alpha-1-microglobulin, which potently inhibits oxidation of low density lipoprotein particles and limits vascular damage. The sequence is that of Myeloperoxidase (Mpo) from Mus musculus (Mouse).